We begin with the raw amino-acid sequence, 537 residues long: Inositol phosphorylceramide glucuronosyltransferase 1 (537 aa).

A helical membrane pass occupies residues 6-26 (TSLWVLLLALVSIQLNGSFGS). Mn(2+) contacts are provided by aspartate 124 and aspartate 126. Residues 124–126 (DAD), 153–155 (NSG), 180–184 (TGGDQ), and 248–255 (HYTLGPLK) each bind substrate. Histidine 248 contacts Mn(2+). 5 helical membrane passes run 293 to 313 (DELV…FCIY), 375 to 395 (VSVV…FAIV), 406 to 426 (VLVY…FLLF), 468 to 488 (MAFL…TALF), and 494 to 514 (MVGL…HLAV).

This sequence belongs to the glycosyltransferase 8 family. Glycogenin subfamily. Mn(2+) serves as cofactor. Expressed in seedlings, roots, leaves, stems and siliques.

The protein resides in the golgi apparatus membrane. It catalyses the reaction glucuronate acceptor + UDP-alpha-D-glucuronate = acceptor beta-D-glucuronoside + UDP + H(+). The enzyme catalyses a 1D-myo-inositol-1-phospho-N-[(R)-2-hydroxy-very-long-chain fatty acyl]-(R)-4-hydroxysphingoid base + UDP-alpha-D-glucuronate = an alpha-D-glucuronosyl-(1&lt;-&gt;6)-1D-myo-inositol-1-phospho-N-[(R)-2-hydroxy-very-long-chain fatty acyl]-(R)-4-hydroxysphingoid base + UDP + H(+). It functions in the pathway sphingolipid metabolism. Its function is as follows. Mediates the transfer of glucuronic acid (GlcA) from UDP-GlcA to glycosyl inositol phosphorylceramides (GIPCs). The formation of GIPCs sphingolipids is essential for pollen function, plant growth and defense. Required for global fitness. This Arabidopsis thaliana (Mouse-ear cress) protein is Inositol phosphorylceramide glucuronosyltransferase 1.